Reading from the N-terminus, the 320-residue chain is MARPKIALIGAGQIGGTLAHLAALKELGDVVLFDIAEGVPQGKALDIAESGPSEKFDADMSGTNDYADIAGADVCIVTAGVARKPGMSRDDLLGINLKVMKSVGEGIRDNAPDAFVICITNPLDAMVWALREFSGLPHHKVCGMAGVLDSARFRHFLADEFNVSMKDVTAFVLGGHGDTMVPLTRYSTVAGIPLPDLIEMGWTTQEKMDAIVQRTRDGGAEIVGLLKTGSAFYAPATSAIEMAEAYLKDQKRVLPCAAYVDGALGLKGMYVGVPTVIGAGGVERVVDINMTKDEQAMFDNSVAAVNGLVEACKAIDETLS.

NAD(+) is bound by residues 10–15 and aspartate 34; that span reads GAGQIG. Arginine 83 and arginine 89 together coordinate substrate. Residues asparagine 96 and 119-121 contribute to the NAD(+) site; that span reads ITN. Residues asparagine 121 and arginine 152 each contribute to the substrate site. Catalysis depends on histidine 176, which acts as the Proton acceptor.

Belongs to the LDH/MDH superfamily. MDH type 3 family.

It catalyses the reaction (S)-malate + NAD(+) = oxaloacetate + NADH + H(+). Its function is as follows. Catalyzes the reversible oxidation of malate to oxaloacetate. This Jannaschia sp. (strain CCS1) protein is Malate dehydrogenase.